The chain runs to 316 residues: tRNA methyltransferase 10 homolog B (316 aa).

Disordered stretches follow at residues 1-30 (MDCEWEGRPQRAGSRASQDPEGLPEARDDG) and 42-98 (VEYD…DLGN). The span at 63–82 (VQRKQRHWERIVSSKKSKRK) shows a compositional bias: basic residues. A coiled-coil region spans residues 75–96 (SSKKSKRKQERERRKIKRAEDL). Over residues 83–95 (QERERRKIKRAED) the composition is skewed to basic and acidic residues. Residues 113–310 (TKEKLLEAKH…KGVSPGKGYI (198 aa)) form the SAM-dependent MTase TRM10-type domain.

This sequence belongs to the class IV-like SAM-binding methyltransferase superfamily. TRM10 family.

The enzyme catalyses guanosine(9) in tRNA + S-adenosyl-L-methionine = N(1)-methylguanosine(9) in tRNA + S-adenosyl-L-homocysteine + H(+). Its function is as follows. S-adenosyl-L-methionine-dependent guanine N(1)-methyltransferase that catalyzes the formation of N(1)-methylguanine at position 9 (m1G9) in tRNAs. Probably not able to catalyze formation of N(1)-methyladenine at position 9 (m1A9) in tRNAs. The chain is tRNA methyltransferase 10 homolog B (Trmt10b) from Rattus norvegicus (Rat).